A 157-amino-acid chain; its full sequence is Transcription elongation factor GreB (157 aa).

It belongs to the GreA/GreB family. GreB subfamily.

Functionally, necessary for efficient RNA polymerase transcription elongation past template-encoded arresting sites. The arresting sites in DNA have the property of trapping a certain fraction of elongating RNA polymerases that pass through, resulting in locked ternary complexes. Cleavage of the nascent transcript by cleavage factors such as GreA or GreB allows the resumption of elongation from the new 3'terminus. GreB releases sequences of up to 9 nucleotides in length. The sequence is that of Transcription elongation factor GreB from Salmonella typhimurium (strain LT2 / SGSC1412 / ATCC 700720).